Here is a 155-residue protein sequence, read N- to C-terminus: Putative pre-16S rRNA nuclease (155 aa).

This sequence belongs to the YqgF nuclease family.

It is found in the cytoplasm. In terms of biological role, could be a nuclease involved in processing of the 5'-end of pre-16S rRNA. The polypeptide is Putative pre-16S rRNA nuclease (Xanthomonas oryzae pv. oryzae (strain MAFF 311018)).